Reading from the N-terminus, the 729-residue chain is 1,4-alpha-glucan branching enzyme GlgB (729 aa).

The active-site Nucleophile is the Asp-405. Glu-458 acts as the Proton donor in catalysis.

It belongs to the glycosyl hydrolase 13 family. GlgB subfamily. Monomer.

The enzyme catalyses Transfers a segment of a (1-&gt;4)-alpha-D-glucan chain to a primary hydroxy group in a similar glucan chain.. Its pathway is glycan biosynthesis; glycogen biosynthesis. In terms of biological role, catalyzes the formation of the alpha-1,6-glucosidic linkages in glycogen by scission of a 1,4-alpha-linked oligosaccharide from growing alpha-1,4-glucan chains and the subsequent attachment of the oligosaccharide to the alpha-1,6 position. This is 1,4-alpha-glucan branching enzyme GlgB from Mannheimia succiniciproducens (strain KCTC 0769BP / MBEL55E).